Reading from the N-terminus, the 4753-residue chain is Dynein heavy chain domain-containing protein 1 (4753 aa).

Coiled-coil stretches lie at residues 826–858 and 936–991; these read IHAI…ALHE and KLQQ…LSEL. A disordered region spans residues 2688 to 2766; it reads HLGKDHQESE…SRGMKESISH (79 aa). The segment covering 2695–2712 has biased composition (acidic residues); it reads ESEEEEEEERVPEVESEG. Residues 2740 to 2751 are compositionally biased toward polar residues; that stretch reads RVSNSRDPSLTP. Coiled-coil stretches lie at residues 3125–3227, 3590–3651, and 4431–4460; these read LQQQ…MSKA, MRNQ…QGSK, and GAQL…LTHV. A disordered region spans residues 3580–3657; the sequence is ALTEGRGKGL…QGSKPAYETQ (78 aa). Over residues 3602–3615 the composition is skewed to acidic residues; sequence KEEDDESEESNEAE. The segment covering 3616-3631 has biased composition (basic and acidic residues); the sequence is DQTKEQKAEERKNEQE. A compositionally biased stretch (acidic residues) spans 3632-3641; that stretch reads KEQEENEEKE. Residues 4669-4697 are disordered; that stretch reads ALQDSPSSQPSPLPPVSISTQAPGTSDLP.

Belongs to the dynein heavy chain family. As to expression, expressed in spermatozoa (at protein level).

The protein resides in the cell projection. The protein localises to the cilium. It is found in the flagellum. Essential for the normal assembly and function of sperm flagella axonemes. The polypeptide is Dynein heavy chain domain-containing protein 1 (DNHD1) (Homo sapiens (Human)).